The following is a 69-amino-acid chain: uncharacterized protein (69 aa).

This is an uncharacterized protein from Treponema pallidum (strain Nichols).